The primary structure comprises 150 residues: 3-dehydroquinate dehydratase (150 aa).

Tyr-22 functions as the Proton acceptor in the catalytic mechanism. Residues Asn-73, His-79, and Asp-86 each contribute to the substrate site. The active-site Proton donor is His-99. Substrate contacts are provided by residues 100-101 (LS) and Arg-110.

This sequence belongs to the type-II 3-dehydroquinase family. In terms of assembly, homododecamer.

The catalysed reaction is 3-dehydroquinate = 3-dehydroshikimate + H2O. Its pathway is metabolic intermediate biosynthesis; chorismate biosynthesis; chorismate from D-erythrose 4-phosphate and phosphoenolpyruvate: step 3/7. Its function is as follows. Catalyzes a trans-dehydration via an enolate intermediate. In Dinoroseobacter shibae (strain DSM 16493 / NCIMB 14021 / DFL 12), this protein is 3-dehydroquinate dehydratase.